A 348-amino-acid polypeptide reads, in one-letter code: tRNA N6-adenosine threonylcarbamoyltransferase (348 aa).

2 residues coordinate Fe cation: histidine 111 and histidine 115. Substrate-binding positions include 134–138, aspartate 167, glycine 180, aspartate 184, and asparagine 279; that span reads LVSGG. Position 307 (aspartate 307) interacts with Fe cation.

The protein belongs to the KAE1 / TsaD family. Fe(2+) is required as a cofactor.

The protein resides in the cytoplasm. It carries out the reaction L-threonylcarbamoyladenylate + adenosine(37) in tRNA = N(6)-L-threonylcarbamoyladenosine(37) in tRNA + AMP + H(+). Functionally, required for the formation of a threonylcarbamoyl group on adenosine at position 37 (t(6)A37) in tRNAs that read codons beginning with adenine. Is involved in the transfer of the threonylcarbamoyl moiety of threonylcarbamoyl-AMP (TC-AMP) to the N6 group of A37, together with TsaE and TsaB. TsaD likely plays a direct catalytic role in this reaction. The chain is tRNA N6-adenosine threonylcarbamoyltransferase from Synechocystis sp. (strain ATCC 27184 / PCC 6803 / Kazusa).